The primary structure comprises 208 residues: Protein-L-isoaspartate O-methyltransferase (208 aa).

Serine 59 is an active-site residue.

It belongs to the methyltransferase superfamily. L-isoaspartyl/D-aspartyl protein methyltransferase family.

It is found in the cytoplasm. The enzyme catalyses [protein]-L-isoaspartate + S-adenosyl-L-methionine = [protein]-L-isoaspartate alpha-methyl ester + S-adenosyl-L-homocysteine. Functionally, catalyzes the methyl esterification of L-isoaspartyl residues in peptides and proteins that result from spontaneous decomposition of normal L-aspartyl and L-asparaginyl residues. It plays a role in the repair and/or degradation of damaged proteins. The sequence is that of Protein-L-isoaspartate O-methyltransferase from Klebsiella pneumoniae (strain 342).